Here is a 291-residue protein sequence, read N- to C-terminus: 4-hydroxy-tetrahydrodipicolinate synthase (291 aa).

Thr45 contacts pyruvate. The active-site Proton donor/acceptor is the Tyr133. Catalysis depends on Lys161, which acts as the Schiff-base intermediate with substrate. A pyruvate-binding site is contributed by Ile203.

This sequence belongs to the DapA family. In terms of assembly, homotetramer; dimer of dimers.

Its subcellular location is the cytoplasm. It catalyses the reaction L-aspartate 4-semialdehyde + pyruvate = (2S,4S)-4-hydroxy-2,3,4,5-tetrahydrodipicolinate + H2O + H(+). Its pathway is amino-acid biosynthesis; L-lysine biosynthesis via DAP pathway; (S)-tetrahydrodipicolinate from L-aspartate: step 3/4. Catalyzes the condensation of (S)-aspartate-beta-semialdehyde [(S)-ASA] and pyruvate to 4-hydroxy-tetrahydrodipicolinate (HTPA). This Laribacter hongkongensis (strain HLHK9) protein is 4-hydroxy-tetrahydrodipicolinate synthase.